The sequence spans 447 residues: BAG family molecular chaperone regulator 5 (447 aa).

BAG domains follow at residues 9-86 (SISR…EQNA), 95-167 (QNIF…ENCM), 182-260 (SVAK…DLEE), 275-350 (SILK…DLKE), and 365-442 (SHKA…DLKS).

In terms of assembly, binds to the ATPase domain of HSP/HSP70 chaperones. Binds PRKN. Interacts complex with HSPA8 and JPH2.

Its function is as follows. Co-chaperone for HSP/HSP70 proteins. It functions as a nucleotide-exchange factor promoting the release of ADP from HSP70, thereby activating Hsp70-mediated protein refolding. Has an essential role in maintaining proteostasis at junctional membrane complexes (JMC), where it may function as a scaffold between the HSPA8 chaperone and JMC proteins enabling correct, HSPA8-dependent JMC protein folding. Inhibits both auto-ubiquitination of PRKN and ubiquitination of target proteins by PRKN. This Bos taurus (Bovine) protein is BAG family molecular chaperone regulator 5 (BAG5).